The following is a 337-amino-acid chain: Glyceraldehyde-3-phosphate dehydrogenase 3, cytosolic (337 aa).

The binding to NAD stretch occupies residues 1-151; sequence MAKIKIGING…YKSDINIVSN (151 aa). NAD(+) is bound by residues 13–14, D35, and R82; that span reads RI. The catalytic stretch occupies residues 152-337; it reads ASCTTNCLAP…DLIRHMNSTK (186 aa). D-glyceraldehyde 3-phosphate contacts are provided by residues 153–155, T184, 213–214, and R236; these read SCT and TG. C154 (nucleophile) is an active-site residue. Position 318 (N318) interacts with NAD(+).

This sequence belongs to the glyceraldehyde-3-phosphate dehydrogenase family. As to quaternary structure, homotetramer.

The protein localises to the cytoplasm. It catalyses the reaction D-glyceraldehyde 3-phosphate + phosphate + NAD(+) = (2R)-3-phospho-glyceroyl phosphate + NADH + H(+). It participates in carbohydrate degradation; glycolysis; pyruvate from D-glyceraldehyde 3-phosphate: step 1/5. In terms of biological role, key enzyme in glycolysis that catalyzes the first step of the pathway by converting D-glyceraldehyde 3-phosphate (G3P) into 3-phospho-D-glyceroyl phosphate. Essential for the maintenance of cellular ATP levels and carbohydrate metabolism. The polypeptide is Glyceraldehyde-3-phosphate dehydrogenase 3, cytosolic (GAPC3) (Zea mays (Maize)).